A 205-amino-acid chain; its full sequence is Peptidyl-tRNA hydrolase (205 aa).

Y14 provides a ligand contact to tRNA. Residue H19 is the Proton acceptor of the active site. Residues Y68, N70, and N116 each contribute to the tRNA site.

It belongs to the PTH family. In terms of assembly, monomer.

Its subcellular location is the cytoplasm. The enzyme catalyses an N-acyl-L-alpha-aminoacyl-tRNA + H2O = an N-acyl-L-amino acid + a tRNA + H(+). Hydrolyzes ribosome-free peptidyl-tRNAs (with 1 or more amino acids incorporated), which drop off the ribosome during protein synthesis, or as a result of ribosome stalling. In terms of biological role, catalyzes the release of premature peptidyl moieties from peptidyl-tRNA molecules trapped in stalled 50S ribosomal subunits, and thus maintains levels of free tRNAs and 50S ribosomes. The sequence is that of Peptidyl-tRNA hydrolase from Caulobacter vibrioides (strain ATCC 19089 / CIP 103742 / CB 15) (Caulobacter crescentus).